A 310-amino-acid polypeptide reads, in one-letter code: Vomeronasal type-1 receptor 3 (310 aa).

Topologically, residues 1–5 (MASKD) are extracellular. A helical transmembrane segment spans residues 6–26 (FAIGMILSQIMVGFLGNFFLL). Topologically, residues 27–50 (YHYSFLHFTRGMLQSTDLTLKHLT) are cytoplasmic. A helical transmembrane segment spans residues 51–71 (IANSLVILSKGIPQTMAAFGL). Topologically, residues 72 to 91 (KDSLSDIGCKFVFYVHRVGR) are extracellular. A helical transmembrane segment spans residues 92–112 (AVCTGNACLLSVFQVITISSS). Topologically, residues 113–129 (EFRWAELKLHAHKYIRS) are cytoplasmic. Residues 130 to 150 (FILVLCWILNTLVNITVPLHV) traverse the membrane as a helical segment. Topologically, residues 151 to 186 (TGKWNSINSTKTNDYGYCSGGSRSRIPHSLHIVLLS) are extracellular. A glycan (N-linked (GlcNAc...) asparagine) is linked at N158. A helical membrane pass occupies residues 187 to 207 (SLDVLCLGLMTLASGSMVFIL). The Cytoplasmic portion of the chain corresponds to 208-235 (HRLKQQVQHIHGTNLSPRSSPESRVTQS). A helical transmembrane segment spans residues 236-258 (ILVLVSTLCYFTRSPPSLHMSLF). Topologically, residues 259–263 (PNPSW) are extracellular. Residues 264–284 (WPLNASALITACFPTVSPFVL) form a helical membrane-spanning segment. Residues 285–310 (MSRHPRIPRLGSACCGRNPQFPKLVR) lie on the Cytoplasmic side of the membrane.

The protein belongs to the G-protein coupled receptor 1 family.

It is found in the cell membrane. Putative pheromone receptor. The protein is Vomeronasal type-1 receptor 3 (VN1R3) of Pan troglodytes (Chimpanzee).